Here is a 109-residue protein sequence, read N- to C-terminus: Thiosulfate sulfurtransferase GlpE (109 aa).

The Rhodanese domain occupies 17–105 (KEGKTALVDI…WARSYPQDIT (89 aa)). Residue C65 is the Cysteine persulfide intermediate of the active site.

It belongs to the GlpE family.

Its subcellular location is the cytoplasm. It carries out the reaction thiosulfate + hydrogen cyanide = thiocyanate + sulfite + 2 H(+). The enzyme catalyses thiosulfate + [thioredoxin]-dithiol = [thioredoxin]-disulfide + hydrogen sulfide + sulfite + 2 H(+). Functionally, transferase that catalyzes the transfer of sulfur from thiosulfate to thiophilic acceptors such as cyanide or dithiols. May function in a CysM-independent thiosulfate assimilation pathway by catalyzing the conversion of thiosulfate to sulfite, which can then be used for L-cysteine biosynthesis. In Yersinia pestis, this protein is Thiosulfate sulfurtransferase GlpE.